Consider the following 126-residue polypeptide: uncharacterized protein (126 aa).

This is an uncharacterized protein from Bacillus subtilis (strain 168).